The chain runs to 853 residues: Dynein axonemal assembly factor 5 (853 aa).

Ala-2 bears the N-acetylalanine mark. HEAT repeat units lie at residues 69 to 107, 200 to 238, 240 to 276, 278 to 316, 374 to 412, 597 to 636, 694 to 732, 736 to 774, and 782 to 820; these read GPWARLLLPRLLRLLSDPAEGCRALAAHLLDLGLRRAAR, HMQSESLIGPLMQTISHQHWKVRVAVIEATGTVIQFGSG, SVDDVLSHFAQRLFDDVPQVRQAVTSVVGGWLLNLRD, YSFLHKLTPLLLSSFSDEMPEIRQTATSLWEKVGLQWQQ, RVKAAQLLPVLLLHAEDHITQHLEIVLRTLHQACTDEEK, GEALQHVIPTLRACLQPSTDPHMRLKLFSILSMMLLRPKD, QEAQETLMPQVLATLEDDSQTTRLMSCRIINMFLKNSGD, PEKFLKVYPELLKRLDDVSNDVRMAAASALLTWLKCIES, and QSSVQFLYRELLVHLDDPESAIQDTVLEVLKEGSVLFPD.

The protein belongs to the DNAAF5 family. As to quaternary structure, interacts with DNAI2; probably involved in outer arm dynein assembly. As to expression, expressed in ciliated cells including ependymal cells lining the lateral ventricles and multiciliated epithelium of oviduct ampulla.

Its subcellular location is the cytoplasm. It localises to the cytoplasmic granule. Cytoplasmic protein involved in the delivery of the dynein machinery to the motile cilium. It is required for the assembly of the axonemal dynein inner and outer arms, two structures attached to the peripheral outer doublet A microtubule of the axoneme, that play a crucial role in cilium motility. This chain is Dynein axonemal assembly factor 5, found in Mus musculus (Mouse).